A 472-amino-acid chain; its full sequence is Aspartyl/glutamyl-tRNA(Asn/Gln) amidotransferase subunit B (472 aa).

Belongs to the GatB/GatE family. GatB subfamily. Heterotrimer of A, B and C subunits.

The catalysed reaction is L-glutamyl-tRNA(Gln) + L-glutamine + ATP + H2O = L-glutaminyl-tRNA(Gln) + L-glutamate + ADP + phosphate + H(+). It carries out the reaction L-aspartyl-tRNA(Asn) + L-glutamine + ATP + H2O = L-asparaginyl-tRNA(Asn) + L-glutamate + ADP + phosphate + 2 H(+). Functionally, allows the formation of correctly charged Asn-tRNA(Asn) or Gln-tRNA(Gln) through the transamidation of misacylated Asp-tRNA(Asn) or Glu-tRNA(Gln) in organisms which lack either or both of asparaginyl-tRNA or glutaminyl-tRNA synthetases. The reaction takes place in the presence of glutamine and ATP through an activated phospho-Asp-tRNA(Asn) or phospho-Glu-tRNA(Gln). In Campylobacter jejuni subsp. doylei (strain ATCC BAA-1458 / RM4099 / 269.97), this protein is Aspartyl/glutamyl-tRNA(Asn/Gln) amidotransferase subunit B.